A 397-amino-acid chain; its full sequence is Major outer membrane porin, serovar H (397 aa).

Positions 1-22 (MKKLLKSVLVFAALSSASSLQA) are cleaved as a signal peptide.

This sequence belongs to the chlamydial porin (CP) (TC 1.B.2) family. Part of a disulfide cross-linked outer membrane complex (COMC) composed of the major outer membrane porin (MOMP), the small cysteine-rich protein (OmcA) and the large cysteine-rich periplasmic protein (OmcB).

It localises to the cell outer membrane. Its function is as follows. In elementary bodies (EBs, the infectious stage, which is able to survive outside the host cell) provides the structural integrity of the outer envelope through disulfide cross-links with the small cysteine-rich protein and the large cysteine-rich periplasmic protein. It has been described in publications as the Sarkosyl-insoluble COMC (Chlamydia outer membrane complex), and serves as the functional equivalent of peptidoglycan. In terms of biological role, permits diffusion of specific solutes through the outer membrane. The protein is Major outer membrane porin, serovar H (ompA) of Chlamydia trachomatis.